Consider the following 509-residue polypeptide: Protein MAIN-LIKE 1 (509 aa).

The interval 477–509 (GYGKRRRRNEHTPTPNNGGGNDISSLLLQKEDS) is disordered. The span at 488–503 (TPTPNNGGGNDISSLL) shows a compositional bias: polar residues.

As to expression, expressed in root tips, the shoot apical meristem (SAM), leaves, mature flowers and embryos.

Its subcellular location is the nucleus. Acts as an important factor for cell fate determination and maintenance throughout plant development. Required for the organization of the root apical meristem (RAM) and the shoot apical meristem (SAM). Required to maintain genome stability and cell division activity in meristematic cells. The chain is Protein MAIN-LIKE 1 from Arabidopsis thaliana (Mouse-ear cress).